Here is a 129-residue protein sequence, read N- to C-terminus: Large ribosomal subunit protein uL22 (129 aa).

This sequence belongs to the universal ribosomal protein uL22 family. In terms of assembly, part of the 50S ribosomal subunit.

Its function is as follows. This protein binds specifically to 23S rRNA; its binding is stimulated by other ribosomal proteins, e.g. L4, L17, and L20. It is important during the early stages of 50S assembly. It makes multiple contacts with different domains of the 23S rRNA in the assembled 50S subunit and ribosome. In terms of biological role, the globular domain of the protein is located near the polypeptide exit tunnel on the outside of the subunit, while an extended beta-hairpin is found that lines the wall of the exit tunnel in the center of the 70S ribosome. The protein is Large ribosomal subunit protein uL22 of Onion yellows phytoplasma (strain OY-M).